The sequence spans 297 residues: Band 7 protein AAEL010189 (297 aa).

The span at Met-1–Pro-13 shows a compositional bias: polar residues. The disordered stretch occupies residues Met-1–Glu-30. Residues Ile-37 to Cys-57 form a helical membrane-spanning segment.

This sequence belongs to the band 7/mec-2 family.

The protein localises to the membrane. This is Band 7 protein AAEL010189 from Aedes aegypti (Yellowfever mosquito).